Consider the following 686-residue polypeptide: Chromatin modification-related protein EAF1 (686 aa).

The segment at 71–97 (QMKRRQNDHHNQGPPPKVQKSTVDSLK) is disordered. An HSA domain is found at 202-280 (FKFIRKSKKK…DKSIIRNLPV (79 aa)). A Myb-like domain is found at 354-418 (IPTIWLPEDD…FERYIQLNDK (65 aa)). 3 disordered regions span residues 493-517 (RKST…RIPT), 544-617 (ARMV…QQRR), and 657-686 (QQGY…PNNA). Polar residues predominate over residues 497 to 506 (AELQANQNVT). Over residues 554 to 568 (APAPAPAPPPPPPPK) the composition is skewed to pro residues. Polar residues predominate over residues 574–588 (TTPNGTPLTNEQIQH). Positions 599–613 (LQQQQQQQQQQQHQQ) are enriched in low complexity. The span at 671–686 (QKNQTASPMSGSPNNA) shows a compositional bias: polar residues.

It belongs to the EAF1 family. Component of the NuA4 histone acetyltransferase complex.

The protein localises to the nucleus. Its function is as follows. Component of the NuA4 histone acetyltransferase complex which is involved in transcriptional activation of selected genes principally by acetylation of nucleosomal histone H4 and H2A. The NuA4 complex is also involved in DNA repair. The polypeptide is Chromatin modification-related protein EAF1 (VID21) (Candida albicans (strain SC5314 / ATCC MYA-2876) (Yeast)).